A 494-amino-acid chain; its full sequence is Lysine--tRNA ligase (494 aa).

Mg(2+) is bound by residues Glu399 and Glu406.

The protein belongs to the class-II aminoacyl-tRNA synthetase family. Mg(2+) is required as a cofactor.

Its subcellular location is the cytoplasm. It catalyses the reaction tRNA(Lys) + L-lysine + ATP = L-lysyl-tRNA(Lys) + AMP + diphosphate. This Saccharolobus solfataricus (strain ATCC 35092 / DSM 1617 / JCM 11322 / P2) (Sulfolobus solfataricus) protein is Lysine--tRNA ligase (lysS).